Consider the following 437-residue polypeptide: UDP-N-acetylmuramate--L-alanine ligase (437 aa).

114-120 is a binding site for ATP; it reads GTHGKTS.

It belongs to the MurCDEF family.

It localises to the cytoplasm. It catalyses the reaction UDP-N-acetyl-alpha-D-muramate + L-alanine + ATP = UDP-N-acetyl-alpha-D-muramoyl-L-alanine + ADP + phosphate + H(+). Its pathway is cell wall biogenesis; peptidoglycan biosynthesis. Cell wall formation. The polypeptide is UDP-N-acetylmuramate--L-alanine ligase (Lactobacillus helveticus (strain DPC 4571)).